Here is a 521-residue protein sequence, read N- to C-terminus: Spermidine transporter DUR31 (521 aa).

A helical membrane pass occupies residues 11 to 31 (AIIYLSYAFMLATGLFLAWKF). An N-linked (GlcNAc...) asparagine glycan is attached at Asn41. Transmembrane regions (helical) follow at residues 47-67 (IPLALNFVASAMGVGIITTYA), 79-99 (LVYTICGAIPIVGFAVVGPVI), 117-137 (FGMVTALYLSAFTCLTMFLFM), 156-176 (ALGAVIVECVVTTIYTFFGGF), 187-207 (GVCVLLLLIICAAGMGSYIEI), 227-247 (LVYILFVAIVTNDCFMSGFWL), 264-284 (IAAFVTFAICTLIGTTGFLAV), 310-330 (WLVAFVLIFCIVLSTCTFDSL), 354-374 (IMLILIMVPIVVLAVKVADNI), 377-397 (IYLIADLVSAAIIPSVFLGLA), 406-426 (GFDVMAGGLGALLGVFIFGTV), and 453-473 (FGAFVIAPVGGVIITLASAAL).

This sequence belongs to the sodium:solute symporter (SSF) (TC 2.A.21) family.

The protein resides in the membrane. It carries out the reaction spermidine(in) = spermidine(out). In terms of biological role, spermidine transporter that is also used by salivary gland-secreted histatin 5 (Hst 5) to enter into candidal cells. A major component of host nonimmune defense systems is salivary histatins, a family of small (3-4 kDa), histidine-rich, cationic proteins secreted by major salivary glands in humans and higher primates. Hst 5 is the most potent of the 12 histatin family members and has fungicidal activity against blastoconidial and filamentous forms of Candida albicans. DUR31 only functions under high concentrations of Hst 5. Hst 5 cojugates to spermidine to be uptaken by DUR31. The polypeptide is Spermidine transporter DUR31 (Candida albicans (strain SC5314 / ATCC MYA-2876) (Yeast)).